Here is a 354-residue protein sequence, read N- to C-terminus: Envelope protein US28 (354 aa).

Residues 1–37 lie on the Extracellular side of the membrane; sequence MTPTTTTAELTTEFDYDEDATPCVFTDVLNQSKPVTL. A glycan (N-linked (GlcNAc...) asparagine; by host) is linked at Asn-30. A helical membrane pass occupies residues 38 to 58; that stretch reads FLYGVVFLFGSIGNFLVIFTI. At 59 to 69 the chain is on the cytoplasmic side; sequence TWRRRIQCSGD. A helical transmembrane segment spans residues 70 to 90; it reads VYFINLAAADLLFVCTLPLWM. At 91–101 the chain is on the extracellular side; sequence QYLLDHNSLAS. A helical transmembrane segment spans residues 102-122; that stretch reads VPCTLLTACFYVAMFASLCFI. Over 123–145 the chain is Cytoplasmic; that stretch reads TEIALDRYYAIVYMRYRPVKQAC. A helical membrane pass occupies residues 146–166; sequence LFSIFWWIFAVIIAIPHFMVV. At 167 to 183 the chain is on the extracellular side; it reads TKKDNQCMTDYDYLEVS. The chain crosses the membrane as a helical span at residues 184–204; that stretch reads YPIILNVELMLGAFVIPLSVI. Residues 205 to 228 are Cytoplasmic-facing; that stretch reads SYCYYRISRIVAVSQSRHKGRIVR. Residues 229–249 form a helical membrane-spanning segment; that stretch reads VLIAVVLVFIIFWLPYHLTLF. Residues 250-273 lie on the Extracellular side of the membrane; sequence VDTLKLLKWISSSCEFERSLKRAL. Residues 274–294 form a helical membrane-spanning segment; the sequence is ILTESLAFCHCCLNPLLYVFV. The Cytoplasmic segment spans residues 295 to 354; the sequence is GTKFRQELHCLLAEFRQRLFSRDVSWYHSMSFSRRGSPSRRETSSDTLSDEVCRVSQIIP.

Belongs to the G-protein coupled receptor 1 family. As to quaternary structure, interacts with host GPRASP1; this interaction targets US28 to lysosomes for degradation. Interacts with host CX3CL1/Fractalkine (via N-terminus). In terms of processing, phosphorylated. High phosphorylation occurs concomitantly with receptor endocytosis and correlate with low receptor presence at the plasma membrane.

The protein localises to the host cell membrane. Functionally, receptor for a C-C type chemokine. Binds to a great number of different CC-chemokines including CCL5/RANTES, CCL2/MCP-1, CCL3/MIP-1-alpha as well as CX3CL1/Fractalkine. Transduces signals resulting in the activation of MAP kinase signaling pathways and augmentation of intracellular calcium ion levels, leading to alterations in chemotactic behavior of vascular smooth muscle cells and macrophages. The US28 receptor also exhibits high levels of agonist-independent signaling activity and agonist-independent endocytosis. Interacts with the host Gi complex without activating it, thereby probably interfering with the chemokine-Gi signaling. May also function as a G protein sink to sequester G protein from the cell surface via internalization. Interacts with endogenous Gaq/11 subunits and thereby constitutively activates phospholipase C. This Human cytomegalovirus (strain Merlin) (HHV-5) protein is Envelope protein US28 (US28).